A 380-amino-acid chain; its full sequence is Transmembrane protein 229A (380 aa).

The interval Met-1–Ser-40 is disordered. 2 helical membrane-spanning segments follow: residues Leu-51–Val-71 and Ala-117–Gly-137. The tract at residues Arg-188–Gln-236 is disordered. Over residues Gln-190–Arg-202 the composition is skewed to low complexity. Transmembrane regions (helical) follow at residues Phe-244–Val-264, Leu-278–Leu-298, Val-310–Thr-330, and Leu-343–Tyr-363.

This sequence belongs to the TMEM229 family.

Its subcellular location is the membrane. The polypeptide is Transmembrane protein 229A (TMEM229A) (Homo sapiens (Human)).